The primary structure comprises 478 residues: Trigger factor (478 aa).

Residues 162–243 form the PPIase FKBP-type domain; that stretch reads GDFVSIDLSA…VKSIKERELP (82 aa). Residues 424 to 478 form a disordered region; it reads KDTDGNDIDTTEFFGPSGGAQAEAEGADEADADSDADSDTEADSDTEADEADEAK. Positions 448–478 are enriched in acidic residues; the sequence is EGADEADADSDADSDTEADSDTEADEADEAK.

It belongs to the FKBP-type PPIase family. Tig subfamily.

The protein resides in the cytoplasm. It catalyses the reaction [protein]-peptidylproline (omega=180) = [protein]-peptidylproline (omega=0). Its function is as follows. Involved in protein export. Acts as a chaperone by maintaining the newly synthesized protein in an open conformation. Functions as a peptidyl-prolyl cis-trans isomerase. This chain is Trigger factor, found in Mycobacterium sp. (strain KMS).